Reading from the N-terminus, the 261-residue chain is Putative hydro-lyase Sfum_3393 (261 aa).

This sequence belongs to the D-glutamate cyclase family.

The sequence is that of Putative hydro-lyase Sfum_3393 from Syntrophobacter fumaroxidans (strain DSM 10017 / MPOB).